A 407-amino-acid chain; its full sequence is Venom metalloproteinase 3 (407 aa).

N-linked (GlcNAc...) asparagine glycosylation is found at N42, N91, N126, and N166. A Peptidase M12B domain is found at 191 to 405 (FYPKLLVLVD…TSAACLKDTY (215 aa)). Intrachain disulfides connect C317–C400 and C356–C384. H340 lines the Zn(2+) pocket. Residue E341 is part of the active site. 2 residues coordinate Zn(2+): H344 and H350. The N-linked (GlcNAc...) asparagine glycan is linked to N391.

The protein in the C-terminal section; belongs to the venom metalloproteinase (M12B) family. In terms of assembly, monomer. Zn(2+) is required as a cofactor. As to expression, expressed by the venom gland.

It is found in the secreted. With respect to regulation, the gelatinase activity is inhibited by EDTA. Its function is as follows. The recombinant protein has gelatinase activity. In vivo, injection of this recombinant into fifth instar L.oleracea (host) larvae results in partial insect mortality associated with the molt to sixth instar, with surviving insects showing retarded development and growth. The protein is Venom metalloproteinase 3 of Eulophus pennicornis (Parasitoid wasp).